The chain runs to 62 residues: Chromatin protein Cren7 1 (62 aa).

The protein belongs to the Cren7 family. In terms of assembly, monomer. Methylated at multiple sites, to varying extents.

Its subcellular location is the chromosome. It localises to the cytoplasm. In terms of biological role, a chromatin protein, binds double-stranded DNA without sequence specificity. Constrains negative DNA supercoils. This is Chromatin protein Cren7 1 (cren7-1) from Hyperthermus butylicus (strain DSM 5456 / JCM 9403 / PLM1-5).